Reading from the N-terminus, the 381-residue chain is MSSSDEQPRPRRRNQDRQHPNQNRPVLGRTERDRNRRQFGQNFLRDRKTIARIAETAELRPDLPVLEAGPGEGLLTRELADRARQVTSYEIDPRLAKSLREKLSGHPNIEVVNADFLTAEPPPEPFAFVGAIPYGITSAIVDWCLEAPTIETATMVTQLEFARKRTGDYGRWSRLTVMTWPLFEWEFVEKVDRRLFKPVPKVDSAIMRLRRRAEPLLEGAALERYESMVELCFTGVGGNIQASLLRKYPRRRVEAALDHAGVGGGAVVAYVRPEQWLRLFERLDQKNEPRGGQPQRGRRTGGRDHGDRRTGGQDRGDRRTGGRDHRDRQASGHGDRRSSGRNRDDGRTGEREQGDQGGRRGPSGGGRTGGRPGRRGGPGQR.

Basic and acidic residues predominate over residues 1-19 (MSSSDEQPRPRRRNQDRQH). Residues 1–42 (MSSSDEQPRPRRRNQDRQHPNQNRPVLGRTERDRNRRQFGQN) are disordered. Positions 42, 44, 69, 90, 115, and 131 each coordinate S-adenosyl-L-methionine. A disordered region spans residues 282–381 (RLDQKNEPRG…PGRRGGPGQR (100 aa)). The span at 301-358 (GGRDHGDRRTGGQDRGDRRTGGRDHRDRQASGHGDRRSSGRNRDDGRTGEREQGDQGG) shows a compositional bias: basic and acidic residues. A compositionally biased stretch (gly residues) spans 359–381 (RRGPSGGGRTGGRPGRRGGPGQR).

The protein belongs to the class I-like SAM-binding methyltransferase superfamily. rRNA adenine N(6)-methyltransferase family.

The enzyme catalyses adenosine(2085) in 23S rRNA + 2 S-adenosyl-L-methionine = N(6)-dimethyladenosine(2085) in 23S rRNA + 2 S-adenosyl-L-homocysteine + 2 H(+). In terms of biological role, this protein produces a dimethylation of the adenine residue at position 2085 in 23S rRNA, resulting in reduced affinity between ribosomes and macrolide-lincosamide-streptogramin B antibiotics. This is rRNA adenine N-6-methyltransferase (ermE) from Saccharopolyspora erythraea (strain ATCC 11635 / DSM 40517 / JCM 4748 / NBRC 13426 / NCIMB 8594 / NRRL 2338).